Consider the following 140-residue polypeptide: Thioredoxin H9 (140 aa).

Glycine 2 carries N-myristoyl glycine lipidation. The S-palmitoyl cysteine moiety is linked to residue cysteine 4. At serine 14 the chain carries Phosphoserine. Positions 25–129 constitute a Thioredoxin domain; the sequence is VHLITTKESW…PELQKKVTSI (105 aa). Active-site nucleophile residues include cysteine 57 and cysteine 60. The cysteines at positions 57 and 60 are disulfide-linked. The residue at position 136 (serine 136) is a Phosphoserine.

The protein belongs to the thioredoxin family. Plant H-type subfamily. Ubiquitous.

The protein resides in the cell membrane. Functionally, probable thiol-disulfide oxidoreductase that may play a role in intercellular communication due to its ability to move from cell to cell. The protein is Thioredoxin H9 (TRX9) of Arabidopsis thaliana (Mouse-ear cress).